The sequence spans 361 residues: UDP-N-acetylglucosamine--N-acetylmuramyl-(pentapeptide) pyrophosphoryl-undecaprenol N-acetylglucosamine transferase (361 aa).

UDP-N-acetyl-alpha-D-glucosamine-binding positions include 13–15 (TGG), asparagine 125, arginine 167, serine 196, isoleucine 251, 270–275 (ALTVTE), and glutamine 296.

It belongs to the glycosyltransferase 28 family. MurG subfamily.

It localises to the cell inner membrane. The catalysed reaction is di-trans,octa-cis-undecaprenyl diphospho-N-acetyl-alpha-D-muramoyl-L-alanyl-D-glutamyl-meso-2,6-diaminopimeloyl-D-alanyl-D-alanine + UDP-N-acetyl-alpha-D-glucosamine = di-trans,octa-cis-undecaprenyl diphospho-[N-acetyl-alpha-D-glucosaminyl-(1-&gt;4)]-N-acetyl-alpha-D-muramoyl-L-alanyl-D-glutamyl-meso-2,6-diaminopimeloyl-D-alanyl-D-alanine + UDP + H(+). It functions in the pathway cell wall biogenesis; peptidoglycan biosynthesis. In terms of biological role, cell wall formation. Catalyzes the transfer of a GlcNAc subunit on undecaprenyl-pyrophosphoryl-MurNAc-pentapeptide (lipid intermediate I) to form undecaprenyl-pyrophosphoryl-MurNAc-(pentapeptide)GlcNAc (lipid intermediate II). In Psychrobacter arcticus (strain DSM 17307 / VKM B-2377 / 273-4), this protein is UDP-N-acetylglucosamine--N-acetylmuramyl-(pentapeptide) pyrophosphoryl-undecaprenol N-acetylglucosamine transferase.